The primary structure comprises 79 residues: uncharacterized protein (79 aa).

The protein belongs to the asfivirus D79L family.

This is an uncharacterized protein from African swine fever virus (isolate Tick/South Africa/Pretoriuskop Pr4/1996) (ASFV).